Here is a 161-residue protein sequence, read N- to C-terminus: Cyclic pyranopterin monophosphate synthase (161 aa).

Residues 75–77 and 115–116 each bind substrate; these read MCH and ME. D130 is a catalytic residue.

It belongs to the MoaC family. As to quaternary structure, homohexamer; trimer of dimers.

The catalysed reaction is (8S)-3',8-cyclo-7,8-dihydroguanosine 5'-triphosphate = cyclic pyranopterin phosphate + diphosphate. The protein operates within cofactor biosynthesis; molybdopterin biosynthesis. Catalyzes the conversion of (8S)-3',8-cyclo-7,8-dihydroguanosine 5'-triphosphate to cyclic pyranopterin monophosphate (cPMP). The polypeptide is Cyclic pyranopterin monophosphate synthase (Bacillus cereus (strain ATCC 10987 / NRS 248)).